The following is a 70-amino-acid chain: Small ribosomal subunit protein bS21 (70 aa).

This sequence belongs to the bacterial ribosomal protein bS21 family.

This chain is Small ribosomal subunit protein bS21, found in Polaromonas naphthalenivorans (strain CJ2).